Reading from the N-terminus, the 1196-residue chain is DNA-directed RNA polymerase subunit beta (1196 aa).

Positions 1152-1165 are enriched in acidic residues; the sequence is EEEIEMRDLEDEED. The disordered stretch occupies residues 1152–1196; the sequence is EEEIEMRDLEDEEDAKQADGLALSGDEAPEETASPDVERDAVTKE. A compositionally biased stretch (basic and acidic residues) spans 1187 to 1196; that stretch reads DVERDAVTKE.

The protein belongs to the RNA polymerase beta chain family. As to quaternary structure, the RNAP catalytic core consists of 2 alpha, 1 beta, 1 beta' and 1 omega subunit. When a sigma factor is associated with the core the holoenzyme is formed, which can initiate transcription.

It catalyses the reaction RNA(n) + a ribonucleoside 5'-triphosphate = RNA(n+1) + diphosphate. Functionally, DNA-dependent RNA polymerase catalyzes the transcription of DNA into RNA using the four ribonucleoside triphosphates as substrates. This is DNA-directed RNA polymerase subunit beta from Bacillus velezensis (strain DSM 23117 / BGSC 10A6 / LMG 26770 / FZB42) (Bacillus amyloliquefaciens subsp. plantarum).